Reading from the N-terminus, the 120-residue chain is MFYWILLALAIAAEITGTLSMKWASVSNGNTGFILMLVMITLSYIFLSFAVKKIALGVAYALWEGIGILFITLFSVLLFDEALSAMKIAGLVTLVFGIALIKSGTRKPVNAAKEATHAAV.

Helical transmembrane passes span 1 to 21, 31 to 51, 54 to 74, and 81 to 101; these read MFYW…TLSM, TGFI…SFAV, IALG…ITLF, and EALS…IALI.

This sequence belongs to the drug/metabolite transporter (DMT) superfamily. Small multidrug resistance (SMR) (TC 2.A.7.1) family. MdtJ subfamily. As to quaternary structure, forms a complex with MdtI.

It is found in the cell inner membrane. In terms of biological role, catalyzes the excretion of spermidine. This chain is Spermidine export protein MdtJ, found in Citrobacter koseri (strain ATCC BAA-895 / CDC 4225-83 / SGSC4696).